The primary structure comprises 64 residues: Large ribosomal subunit protein eL37 (64 aa).

The Zn(2+) site is built by C20, C23, C35, and C38. The segment at 20 to 38 (CRRCGRRAFHVRKKVCAAC) adopts a C4-type zinc-finger fold.

Belongs to the eukaryotic ribosomal protein eL37 family. Zn(2+) serves as cofactor.

Its function is as follows. Binds to the 23S rRNA. The sequence is that of Large ribosomal subunit protein eL37 from Methanococcus maripaludis (strain C6 / ATCC BAA-1332).